A 400-amino-acid polypeptide reads, in one-letter code: Acetate kinase (400 aa).

Asn-10 serves as a coordination point for Mg(2+). Position 17 (Lys-17) interacts with ATP. Substrate is bound at residue Arg-91. Asp-150 acts as the Proton donor/acceptor in catalysis. ATP is bound by residues 210–214 (HLGNG), 285–287 (DCR), and 333–337 (GIGEN). Glu-387 lines the Mg(2+) pocket.

The protein belongs to the acetokinase family. Homodimer. Mg(2+) serves as cofactor. The cofactor is Mn(2+).

It is found in the cytoplasm. The enzyme catalyses acetate + ATP = acetyl phosphate + ADP. It functions in the pathway metabolic intermediate biosynthesis; acetyl-CoA biosynthesis; acetyl-CoA from acetate: step 1/2. Catalyzes the formation of acetyl phosphate from acetate and ATP. Can also catalyze the reverse reaction. This is Acetate kinase from Erwinia tasmaniensis (strain DSM 17950 / CFBP 7177 / CIP 109463 / NCPPB 4357 / Et1/99).